The chain runs to 446 residues: tRNA modification GTPase MnmE (446 aa).

Arg-22, Glu-80, and Arg-119 together coordinate (6S)-5-formyl-5,6,7,8-tetrahydrofolate. The region spanning Gly-215–Asn-370 is the TrmE-type G domain. Residue Asn-225 participates in K(+) binding. Residues Asn-225 to Ser-230, Ser-244 to Thr-250, and Asp-269 to Gly-272 contribute to the GTP site. Ser-229 serves as a coordination point for Mg(2+). Ser-244, Ile-246, and Thr-249 together coordinate K(+). Thr-250 contributes to the Mg(2+) binding site. Lys-446 lines the (6S)-5-formyl-5,6,7,8-tetrahydrofolate pocket.

Belongs to the TRAFAC class TrmE-Era-EngA-EngB-Septin-like GTPase superfamily. TrmE GTPase family. In terms of assembly, homodimer. Heterotetramer of two MnmE and two MnmG subunits. K(+) serves as cofactor.

The protein resides in the cytoplasm. In terms of biological role, exhibits a very high intrinsic GTPase hydrolysis rate. Involved in the addition of a carboxymethylaminomethyl (cmnm) group at the wobble position (U34) of certain tRNAs, forming tRNA-cmnm(5)s(2)U34. The sequence is that of tRNA modification GTPase MnmE from Sulfurimonas denitrificans (strain ATCC 33889 / DSM 1251) (Thiomicrospira denitrificans (strain ATCC 33889 / DSM 1251)).